The sequence spans 248 residues: Probable transcriptional regulatory protein Oant_1200 (248 aa).

The protein belongs to the TACO1 family.

The protein localises to the cytoplasm. This is Probable transcriptional regulatory protein Oant_1200 from Brucella anthropi (strain ATCC 49188 / DSM 6882 / CCUG 24695 / JCM 21032 / LMG 3331 / NBRC 15819 / NCTC 12168 / Alc 37) (Ochrobactrum anthropi).